A 137-amino-acid chain; its full sequence is uncharacterized protein (137 aa).

The disordered stretch occupies residues 1–26; that stretch reads MKDKMWCEDTAQPHRRLPAPPSSSSP.

This is an uncharacterized protein from Homo sapiens (Human).